A 271-amino-acid polypeptide reads, in one-letter code: Indole-3-glycerol phosphate synthase (271 aa).

Belongs to the TrpC family.

The enzyme catalyses 1-(2-carboxyphenylamino)-1-deoxy-D-ribulose 5-phosphate + H(+) = (1S,2R)-1-C-(indol-3-yl)glycerol 3-phosphate + CO2 + H2O. Its pathway is amino-acid biosynthesis; L-tryptophan biosynthesis; L-tryptophan from chorismate: step 4/5. This is Indole-3-glycerol phosphate synthase from Lachnoclostridium phytofermentans (strain ATCC 700394 / DSM 18823 / ISDg) (Clostridium phytofermentans).